Here is a 308-residue protein sequence, read N- to C-terminus: Pantothenate kinase (308 aa).

Residue 93 to 100 coordinates ATP; that stretch reads GSVAVGKS.

It belongs to the prokaryotic pantothenate kinase family.

Its subcellular location is the cytoplasm. The catalysed reaction is (R)-pantothenate + ATP = (R)-4'-phosphopantothenate + ADP + H(+). It functions in the pathway cofactor biosynthesis; coenzyme A biosynthesis; CoA from (R)-pantothenate: step 1/5. This is Pantothenate kinase from Corynebacterium aurimucosum (strain ATCC 700975 / DSM 44827 / CIP 107346 / CN-1) (Corynebacterium nigricans).